The chain runs to 51 residues: Insulin (51 aa).

Intrachain disulfides connect Cys-8–Cys-37, Cys-20–Cys-50, and Cys-36–Cys-41.

It belongs to the insulin family. In terms of assembly, heterodimer of a B chain and an A chain linked by two disulfide bonds.

It localises to the secreted. Insulin decreases blood glucose concentration. It increases cell permeability to monosaccharides, amino acids and fatty acids. It accelerates glycolysis, the pentose phosphate cycle, and glycogen synthesis in liver. In Seriola quinqueradiata (Five-ray yellowtail), this protein is Insulin.